A 311-amino-acid polypeptide reads, in one-letter code: 2-phospho-L-lactate transferase (311 aa).

Asp52 and Arg91 together coordinate 7,8-didemethyl-8-hydroxy-5-deazariboflavin.

It belongs to the CofD family. Homodimer. Mg(2+) is required as a cofactor.

It catalyses the reaction (2S)-lactyl-2-diphospho-5'-guanosine + 7,8-didemethyl-8-hydroxy-5-deazariboflavin = oxidized coenzyme F420-0 + GMP + H(+). It participates in cofactor biosynthesis; coenzyme F420 biosynthesis. Its activity is regulated as follows. Inhibited by EDTA in vitro. In terms of biological role, catalyzes the transfer of the 2-phospholactate moiety from (2S)-lactyl-2-diphospho-5'-guanosine to 7,8-didemethyl-8-hydroxy-5-deazariboflavin (FO) with the formation of oxidized coenzyme F420-0 and GMP. In Methanocaldococcus jannaschii (strain ATCC 43067 / DSM 2661 / JAL-1 / JCM 10045 / NBRC 100440) (Methanococcus jannaschii), this protein is 2-phospho-L-lactate transferase.